A 594-amino-acid chain; its full sequence is Potassium-transporting ATPase potassium-binding subunit (594 aa).

A run of 10 helical transmembrane segments spans residues 3-23 (ADFL…APLL), 67-87 (AVAM…LQRL), 136-156 (ALTV…IALV), 179-199 (LYVL…QGVV), 287-307 (LEML…GEMV), 314-334 (VAIL…AAYF), 415-435 (GLYG…LMIG), 453-473 (VALV…VAVL), 519-539 (VLLG…ILAL), and 562-582 (LFVA…YVPA).

This sequence belongs to the KdpA family. The system is composed of three essential subunits: KdpA, KdpB and KdpC.

It localises to the cell inner membrane. Its function is as follows. Part of the high-affinity ATP-driven potassium transport (or Kdp) system, which catalyzes the hydrolysis of ATP coupled with the electrogenic transport of potassium into the cytoplasm. This subunit binds the periplasmic potassium ions and delivers the ions to the membrane domain of KdpB through an intramembrane tunnel. In Bordetella parapertussis (strain 12822 / ATCC BAA-587 / NCTC 13253), this protein is Potassium-transporting ATPase potassium-binding subunit.